Here is a 610-residue protein sequence, read N- to C-terminus: Elongation factor 4 (610 aa).

Positions 11–193 constitute a tr-type G domain; it reads KYIRNFSIVA…QIVTKIPAPA (183 aa). GTP contacts are provided by residues 23–28 and 140–143; these read DHGKST and NKID.

This sequence belongs to the TRAFAC class translation factor GTPase superfamily. Classic translation factor GTPase family. LepA subfamily.

The protein localises to the cell membrane. The catalysed reaction is GTP + H2O = GDP + phosphate + H(+). Required for accurate and efficient protein synthesis under certain stress conditions. May act as a fidelity factor of the translation reaction, by catalyzing a one-codon backward translocation of tRNAs on improperly translocated ribosomes. Back-translocation proceeds from a post-translocation (POST) complex to a pre-translocation (PRE) complex, thus giving elongation factor G a second chance to translocate the tRNAs correctly. Binds to ribosomes in a GTP-dependent manner. This is Elongation factor 4 from Levilactobacillus brevis (strain ATCC 367 / BCRC 12310 / CIP 105137 / JCM 1170 / LMG 11437 / NCIMB 947 / NCTC 947) (Lactobacillus brevis).